Reading from the N-terminus, the 1478-residue chain is DNA-directed RNA polymerase subunit beta' (1478 aa).

Mg(2+) is bound by residues Asp535, Asp537, and Asp539. Residues Cys1034, Cys1109, Cys1116, and Cys1119 each coordinate Zn(2+).

It belongs to the RNA polymerase beta' chain family. The RNAP catalytic core consists of 2 alpha, 1 beta, 1 beta' and 1 omega subunit. When a sigma factor is associated with the core the holoenzyme is formed, which can initiate transcription. The cofactor is Mg(2+). Zn(2+) is required as a cofactor.

The catalysed reaction is RNA(n) + a ribonucleoside 5'-triphosphate = RNA(n+1) + diphosphate. Functionally, DNA-dependent RNA polymerase catalyzes the transcription of DNA into RNA using the four ribonucleoside triphosphates as substrates. This chain is DNA-directed RNA polymerase subunit beta', found in Mycoplasmopsis agalactiae (strain NCTC 10123 / CIP 59.7 / PG2) (Mycoplasma agalactiae).